We begin with the raw amino-acid sequence, 200 residues long: Dephospho-CoA kinase (200 aa).

Residues 3 to 200 (RIGLTGGIGS…LIAEILTRIK (198 aa)) enclose the DPCK domain. Residue 11–16 (GSGKST) participates in ATP binding.

It belongs to the CoaE family.

The protein resides in the cytoplasm. The enzyme catalyses 3'-dephospho-CoA + ATP = ADP + CoA + H(+). Its pathway is cofactor biosynthesis; coenzyme A biosynthesis; CoA from (R)-pantothenate: step 5/5. In terms of biological role, catalyzes the phosphorylation of the 3'-hydroxyl group of dephosphocoenzyme A to form coenzyme A. In Corynebacterium efficiens (strain DSM 44549 / YS-314 / AJ 12310 / JCM 11189 / NBRC 100395), this protein is Dephospho-CoA kinase.